Reading from the N-terminus, the 225-residue chain is mRNA-decapping protein D10 (225 aa).

One can recognise a Nudix hydrolase domain in the interval 35–218 (AKYPLSVIGI…NVIKYIINAV (184 aa)). Positions 116–137 (GKIKDLESITNCLVREIKEELN) match the Nudix box motif. A Mg(2+)-binding site is contributed by glutamate 122. The active-site Nucleophile is the glutamate 131. Glutamate 135 provides a ligand contact to Mn(2+). Aspartate 157 contributes to the Mg(2+) binding site.

The protein belongs to the Nudix hydrolase family. It depends on Mg(2+) as a cofactor. Mn(2+) serves as cofactor.

Its function is as follows. Decapping enzyme required for the removal of the 5'-end m7GpppN cap tethered to viral and host mRNAs to allow their decay in cells. May therefore accelerate viral and cellular mRNA turnover to eliminate competing host mRNAs and allow stage-specific synthesis of viral proteins. Acceleration of the turnover of cellular transcripts may even promote the shutoff of host protein synthesis. The polypeptide is mRNA-decapping protein D10 (Fowlpox virus (strain NVSL) (FPV)).